Reading from the N-terminus, the 1216-residue chain is ATP-dependent helicase/nuclease subunit A (1216 aa).

Residues 26 to 488 (QKKTAEQIEA…ILLKENFRSS (463 aa)) enclose the UvrD-like helicase ATP-binding domain. 47-54 (ASAGSGKT) contributes to the ATP binding site. Residues 515 to 802 (KHQLVFANTK…ELMTIHKSKG (288 aa)) enclose the UvrD-like helicase C-terminal domain.

The protein belongs to the helicase family. AddA subfamily. Heterodimer of AddA and AddB/RexB. Requires Mg(2+) as cofactor.

The catalysed reaction is Couples ATP hydrolysis with the unwinding of duplex DNA by translocating in the 3'-5' direction.. The enzyme catalyses ATP + H2O = ADP + phosphate + H(+). Functionally, the heterodimer acts as both an ATP-dependent DNA helicase and an ATP-dependent, dual-direction single-stranded exonuclease. Recognizes the chi site generating a DNA molecule suitable for the initiation of homologous recombination. The AddA nuclease domain is required for chi fragment generation; this subunit has the helicase and 3' -&gt; 5' nuclease activities. This chain is ATP-dependent helicase/nuclease subunit A, found in Streptococcus pneumoniae (strain CGSP14).